We begin with the raw amino-acid sequence, 108 residues long: Nucleoid-associated protein GK0018 (108 aa).

Residues 1 to 32 (MMRGGMGNMQKMLKQMQKMQKEMQKAQEELAE) are disordered. A compositionally biased stretch (low complexity) spans 9-18 (MQKMLKQMQK). Positions 19 to 32 (MQKEMQKAQEELAE) are enriched in basic and acidic residues.

This sequence belongs to the YbaB/EbfC family. As to quaternary structure, homodimer.

It localises to the cytoplasm. Its subcellular location is the nucleoid. Binds to DNA and alters its conformation. May be involved in regulation of gene expression, nucleoid organization and DNA protection. The polypeptide is Nucleoid-associated protein GK0018 (Geobacillus kaustophilus (strain HTA426)).